A 92-amino-acid polypeptide reads, in one-letter code: Small ribosomal subunit protein uS19c (92 aa).

It belongs to the universal ribosomal protein uS19 family.

Its subcellular location is the plastid. Functionally, protein S19 forms a complex with S13 that binds strongly to the 16S ribosomal RNA. The protein is Small ribosomal subunit protein uS19c of Cuscuta gronovii (Common dodder).